The sequence spans 340 residues: MGPPHSGPGGVRVGALLLLGVLGLVSGLSLEPVYWNSANKRFQAEGGYVLYPQIGDRLDLLCPRARPPGPHSSPNYEFYKLYLVGGAQGRRCEAPPAPNLLLTCDRPDLDLRFTIKFQEYSPNLWGHEFRSHHDYYIIATSDGTREGLESLQGGVCLTRGMKVLLRVGQSPRGGAVPRKPVSEMPMERDRGAAHSLEPGKENLPGDPTSNATSRGAEGPLPPPSMPAVAGAAGGLALLLLGVAGAGGAMCWRRRRAKPSESRHPGPGSFGRGGSLGLGGGGGMGPREAEPGELGIALRGGGAADPPFCPHYEKVSGDYGHPVYIVQDGPPQSPPNIYYKV.

An N-terminal signal peptide occupies residues 1–27; the sequence is MGPPHSGPGGVRVGALLLLGVLGLVSG. The region spanning 28 to 167 is the Ephrin RBD domain; that stretch reads LSLEPVYWNS…TRGMKVLLRV (140 aa). Residues 28–226 are Extracellular-facing; it reads LSLEPVYWNS…EGPLPPPSMP (199 aa). Cystine bridges form between C62–C104 and C92–C156. The interval 168–225 is disordered; it reads GQSPRGGAVPRKPVSEMPMERDRGAAHSLEPGKENLPGDPTSNATSRGAEGPLPPPSM. The segment covering 185 to 200 has biased composition (basic and acidic residues); it reads PMERDRGAAHSLEPGK. N210 carries N-linked (GlcNAc...) asparagine glycosylation. Residues 227–247 form a helical membrane-spanning segment; the sequence is AVAGAAGGLALLLLGVAGAGG. At 248–340 the chain is on the cytoplasmic side; the sequence is AMCWRRRRAK…QSPPNIYYKV (93 aa). The segment at 254–298 is disordered; the sequence is RRAKPSESRHPGPGSFGRGGSLGLGGGGGMGPREAEPGELGIALR. Residues 267-284 are compositionally biased toward gly residues; sequence GSFGRGGSLGLGGGGGMG. R271 bears the Omega-N-methylarginine mark. S274 is subject to Phosphoserine. The PDZ-binding motif lies at 338 to 340; the sequence is YKV.

The protein belongs to the ephrin family. In terms of assembly, interacts with GRIP1 and GRIP2. (Microbial infection) Interacts with nipah virus and hendra virus glycoprotein. In terms of tissue distribution, highly expressed in brain; expressed in embryonic floor plate, roof plate and hindbrain segments.

It is found in the membrane. Cell surface transmembrane ligand for Eph receptors, a family of receptor tyrosine kinases which are crucial for migration, repulsion and adhesion during neuronal, vascular and epithelial development. Binds promiscuously Eph receptors residing on adjacent cells, leading to contact-dependent bidirectional signaling into neighboring cells. The signaling pathway downstream of the receptor is referred to as forward signaling while the signaling pathway downstream of the ephrin ligand is referred to as reverse signaling. May play a pivotal role in forebrain function. Binds to, and induce the collapse of, commissural axons/growth cones in vitro. May play a role in constraining the orientation of longitudinally projecting axons. In terms of biological role, (Microbial infection) Acts as a receptor for nipah virus and hendra virus. The sequence is that of Ephrin-B3 (EFNB3) from Homo sapiens (Human).